The following is a 449-amino-acid chain: GTP-binding protein A (449 aa).

The disordered stretch occupies residues 1–77 (MFNINPYKSK…LSSKTENSLS (77 aa)). Low complexity-rich tracts occupy residues 8–46 (KSKT…SSSS) and 67–77 (SLSSKTENSLS). An AIG1-type G domain is found at 149 to 386 (QNECNVLLLG…FMGHLRAKNK (238 aa)). A G1 region spans residues 158-165 (GRTGVGKS). 158–165 (GRTGVGKS) provides a ligand contact to GTP. The G2 stretch occupies residues 183 to 187 (SCTQD). The segment at 204–207 (DTPG) is G3. Positions 275-278 (TYAN) are G4. The interval 336 to 338 (ENS) is G5.

The protein belongs to the TRAFAC class TrmE-Era-EngA-EngB-Septin-like GTPase superfamily. AIG1/Toc34/Toc159-like paraseptin GTPase family. IAN subfamily.

The chain is GTP-binding protein A (gtpA) from Dictyostelium discoideum (Social amoeba).